A 216-amino-acid chain; its full sequence is 3-isopropylmalate dehydratase small subunit (216 aa).

The protein belongs to the LeuD family. LeuD type 1 subfamily. Heterodimer of LeuC and LeuD.

The catalysed reaction is (2R,3S)-3-isopropylmalate = (2S)-2-isopropylmalate. It functions in the pathway amino-acid biosynthesis; L-leucine biosynthesis; L-leucine from 3-methyl-2-oxobutanoate: step 2/4. In terms of biological role, catalyzes the isomerization between 2-isopropylmalate and 3-isopropylmalate, via the formation of 2-isopropylmaleate. The sequence is that of 3-isopropylmalate dehydratase small subunit from Cupriavidus pinatubonensis (strain JMP 134 / LMG 1197) (Cupriavidus necator (strain JMP 134)).